The chain runs to 226 residues: Clarin-3 (226 aa).

Residues 8–28 (LMFLSSFFTSLGSFIVICSIL) form a helical membrane-spanning segment. An N-linked (GlcNAc...) asparagine glycan is attached at asparagine 83. The next 3 helical transmembrane spans lie at 92–112 (VTILFLVLSLITSLLSSGFTF), 129–149 (VYTWNGLGASFVFVTMILFVA), and 181–201 (FWLILLVILLNIVTVTIIIFY).

It belongs to the clarin family.

The protein localises to the membrane. The chain is Clarin-3 (CLRN3) from Homo sapiens (Human).